The sequence spans 475 residues: UDP-glucosyltransferase UGT13248 (475 aa).

The segment covering 1–17 (METTVTAVSGTTSSSVG) has biased composition (low complexity). The tract at residues 1–20 (METTVTAVSGTTSSSVGHGA) is disordered. UDP-alpha-D-glucose contacts are provided by residues His-38, Ser-152, Thr-299, Cys-352, 369-377 (HCGWNSTLE), and 393-394 (DQ).

This sequence belongs to the UDP-glycosyltransferase family.

Involved in the detoxification of the Fusarium mycotoxin deoxynivalenol by the transfer of glucose from UDP-D-glucose to the hydroxyl group at C-3, forming deoxynivalenol-3-O-beta-D-glucoside. The sequence is that of UDP-glucosyltransferase UGT13248 from Hordeum vulgare subsp. vulgare (Domesticated barley).